Consider the following 272-residue polypeptide: HMP-PP phosphatase (272 aa).

D8 serves as the catalytic Nucleophile. Positions 8, 10, and 212 each coordinate Mg(2+).

The protein belongs to the HAD-like hydrolase superfamily. Cof family. It depends on Mg(2+) as a cofactor.

It carries out the reaction 4-amino-2-methyl-5-(diphosphooxymethyl)pyrimidine + H2O = 4-amino-2-methyl-5-(phosphooxymethyl)pyrimidine + phosphate + H(+). Catalyzes the hydrolysis of 4-amino-2-methyl-5-hydroxymethylpyrimidine pyrophosphate (HMP-PP) to 4-amino-2-methyl-5-hydroxymethylpyrimidine phosphate (HMP-P). In Salmonella enteritidis PT4 (strain P125109), this protein is HMP-PP phosphatase.